The primary structure comprises 213 residues: N-(5'-phosphoribosyl)anthranilate isomerase (213 aa).

It belongs to the TrpF family.

It carries out the reaction N-(5-phospho-beta-D-ribosyl)anthranilate = 1-(2-carboxyphenylamino)-1-deoxy-D-ribulose 5-phosphate. Its pathway is amino-acid biosynthesis; L-tryptophan biosynthesis; L-tryptophan from chorismate: step 3/5. The polypeptide is N-(5'-phosphoribosyl)anthranilate isomerase (Rhodopseudomonas palustris (strain ATCC BAA-98 / CGA009)).